A 95-amino-acid polypeptide reads, in one-letter code: Aspartyl/glutamyl-tRNA(Asn/Gln) amidotransferase subunit C (95 aa).

This sequence belongs to the GatC family. Heterotrimer of A, B and C subunits.

It carries out the reaction L-glutamyl-tRNA(Gln) + L-glutamine + ATP + H2O = L-glutaminyl-tRNA(Gln) + L-glutamate + ADP + phosphate + H(+). The catalysed reaction is L-aspartyl-tRNA(Asn) + L-glutamine + ATP + H2O = L-asparaginyl-tRNA(Asn) + L-glutamate + ADP + phosphate + 2 H(+). Its function is as follows. Allows the formation of correctly charged Asn-tRNA(Asn) or Gln-tRNA(Gln) through the transamidation of misacylated Asp-tRNA(Asn) or Glu-tRNA(Gln) in organisms which lack either or both of asparaginyl-tRNA or glutaminyl-tRNA synthetases. The reaction takes place in the presence of glutamine and ATP through an activated phospho-Asp-tRNA(Asn) or phospho-Glu-tRNA(Gln). This is Aspartyl/glutamyl-tRNA(Asn/Gln) amidotransferase subunit C from Chlorobium phaeovibrioides (strain DSM 265 / 1930) (Prosthecochloris vibrioformis (strain DSM 265)).